The chain runs to 437 residues: Glutamyl-tRNA reductase (437 aa).

Substrate is bound by residues 49–52 (TCNR), S109, 114–116 (EVQ), and Q120. The Nucleophile role is filled by C50. 189-194 (GAGDTA) serves as a coordination point for NADP(+).

It belongs to the glutamyl-tRNA reductase family. Homodimer.

It carries out the reaction (S)-4-amino-5-oxopentanoate + tRNA(Glu) + NADP(+) = L-glutamyl-tRNA(Glu) + NADPH + H(+). The protein operates within porphyrin-containing compound metabolism; protoporphyrin-IX biosynthesis; 5-aminolevulinate from L-glutamyl-tRNA(Glu): step 1/2. It functions in the pathway porphyrin-containing compound metabolism; chlorophyll biosynthesis. In terms of biological role, catalyzes the NADPH-dependent reduction of glutamyl-tRNA(Glu) to glutamate 1-semialdehyde (GSA). The polypeptide is Glutamyl-tRNA reductase (Chloroherpeton thalassium (strain ATCC 35110 / GB-78)).